The following is a 309-amino-acid chain: Heme-dependent oxidative N-demethylase beta subunit (309 aa).

Residues 2–103 (STLLDVRVAA…SPPANLFPLH (102 aa)) enclose the FAD-binding FR-type domain. In terms of domain architecture, 2Fe-2S ferredoxin-type spans 226-309 (FRVELARSGQ…GCGSPILLDL (84 aa)). Residues C260, C265, C268, and C296 each contribute to the [2Fe-2S] cluster site.

It belongs to the PDR/VanB family. The heme-dependent oxidative N-demethylase (HODM) is a heterotetramer composed of a catalytic alpha subunit, a FMN/2Fe-2S-dependent oxidoreductase beta subunit, a gamma subunit with putative aminotransferase activity, and a delta subunit of unknown function. The cofactor is [2Fe-2S] cluster. It depends on FMN as a cofactor.

Its function is as follows. Component of the heme-dependent oxidative N-demethylase (HODM) enzyme, that catalyzes the NADPH-dependent oxidation of dimethylamine (DMA) to methylamine (MA) and formaldehyde. Functions in bacterial methylated amine catabolism, linking alkylamine oxidation to the tetrahydrofolate C1 pool. The beta subunit of HODM binds FMN and a 2Fe-2S cluster, and likely reduces the ferric heme iron of the alpha subunit to ferrous using NADPH. The sequence is that of Heme-dependent oxidative N-demethylase beta subunit from Ectopseudomonas mendocina (strain ymp) (Pseudomonas mendocina).